Consider the following 179-residue polypeptide: Cell division protein SepF (179 aa).

The tract at residues 22–53 is disordered; that stretch reads LPYEKRDEPVFTPVNSSQEPALPMNQPSQSVG. Over residues 34 to 53 the composition is skewed to polar residues; the sequence is PVNSSQEPALPMNQPSQSVG.

It belongs to the SepF family. In terms of assembly, homodimer. Interacts with FtsZ.

The protein resides in the cytoplasm. Functionally, cell division protein that is part of the divisome complex and is recruited early to the Z-ring. Probably stimulates Z-ring formation, perhaps through the cross-linking of FtsZ protofilaments. Its function overlaps with FtsA. This chain is Cell division protein SepF, found in Streptococcus pneumoniae (strain P1031).